Reading from the N-terminus, the 841-residue chain is 27S pre-rRNA (guanosine(2922)-2'-O)-methyltransferase (841 aa).

S-adenosyl-L-methionine contacts are provided by Gly-58, Trp-60, Asp-78, Asp-94, and Asp-119. Catalysis depends on Lys-159, which acts as the Proton acceptor. Positions 360 to 389 form a coiled coil; sequence QEKQRLNVKRERRRKNEMKQKELQRMQMNM. Phosphoserine occurs at positions 455 and 464. Disordered stretches follow at residues 480–534 and 565–654; these read RDAK…DDEA and NNVE…HSRD. The segment covering 505 to 517 has biased composition (basic and acidic residues); the sequence is SLEKKEEEGKDYI. Over residues 518–534 the composition is skewed to acidic residues; sequence EDNDDEGVEGDSDDDEA. Ser-529 bears the Phosphoserine mark. Residues 574–585 are compositionally biased toward polar residues; it reads NTVNDGIMSSES. A compositionally biased stretch (basic and acidic residues) spans 598-607; sequence HEEMHQKQDE. Composition is skewed to acidic residues over residues 608-621 and 629-641; these read ADSS…DSDF and ASEE…DSEE. Positions 642-654 are enriched in basic and acidic residues; that stretch reads EKNQTKKEKHSRD.

This sequence belongs to the class I-like SAM-binding methyltransferase superfamily. RNA methyltransferase RlmE family. SPB1 subfamily. In terms of assembly, component of the nucleolar and nucleoplasmic pre-60S ribosomal particle. Interacts with the snoRNA-associated proteins NOP1 and NOP58.

It is found in the nucleus. It localises to the nucleolus. It carries out the reaction guanosine(2922) in 27S pre-rRNA + S-adenosyl-L-methionine = 2'-O-methylguanosine(2922) in 27S pre-rRNA + S-adenosyl-L-homocysteine + H(+). Its function is as follows. Required for proper assembly of pre-ribosomal particles during the biogenesis of the 60S ribosomal subunit. Specifically methylates the guanosine in position 2922 of the 25S rRNA at the stage of 27S pre-rRNA maturation. Also methylates the uridine in position 2921 in the absence of methylation of this residue guided by snoRNA snR52 at the stage of 35S pre-rRNA maturation. This is 27S pre-rRNA (guanosine(2922)-2'-O)-methyltransferase from Saccharomyces cerevisiae (strain ATCC 204508 / S288c) (Baker's yeast).